We begin with the raw amino-acid sequence, 361 residues long: Peptide chain release factor 1 (361 aa).

At Q238 the chain carries N5-methylglutamine.

Belongs to the prokaryotic/mitochondrial release factor family. Methylated by PrmC. Methylation increases the termination efficiency of RF1.

The protein localises to the cytoplasm. In terms of biological role, peptide chain release factor 1 directs the termination of translation in response to the peptide chain termination codons UAG and UAA. The protein is Peptide chain release factor 1 of Mesomycoplasma hyopneumoniae (strain J / ATCC 25934 / NCTC 10110) (Mycoplasma hyopneumoniae).